Reading from the N-terminus, the 184-residue chain is MAEPQPPSGGLTDEAALSCCSDADPSTKDFLLQQTMLRVKDPKKSLDFYTRVLGMTLIQKCDFPIMKFSLYFLAYEDKNDIPKEKDEKIAWALSRKATLELTHNWGTEDDETQSYHNGNSDPRGFGHIGIAVPDVYSACKRFEELGVKFVKKPDDGKMKGLAFIQDPDGYWIEILNPNKMATLM.

A2 is modified (N-acetylalanine). C19 and C20 form a disulfide bridge. Residues 31 to 177 form the VOC domain; the sequence is LLQQTMLRVK…DGYWIEILNP (147 aa). Substrate is bound by residues Q34 and R38. A Zn(2+)-binding site is contributed by Q34. An intrachain disulfide couples C61 to C139. An N6-succinyllysine modification is found at K88. E100 contributes to the Zn(2+) binding site. Residue N104 coordinates substrate. T107 is subject to Phosphothreonine. 2 residues coordinate substrate: R123 and H127. Position 127 (H127) interacts with Zn(2+). C139 carries the S-glutathionyl cysteine; alternate modification. Residue K148 is modified to N6-acetyllysine; alternate. At K148 the chain carries N6-succinyllysine; alternate. 157–158 is a binding site for substrate; that stretch reads KM. Zn(2+) is bound at residue E173. The active-site Proton donor/acceptor is the E173.

It belongs to the glyoxalase I family. As to quaternary structure, homodimer. Zn(2+) serves as cofactor. Glutathionylation at Cys-139 inhibits enzyme activity. Post-translationally, phosphorylated at Thr-107 in the presence of CaMK2. However, this is a consensus site for phosphorylation by CK2 so phosphorylation may be mediated by CK2 rather than CaMK2. Phosphorylation is induced by TNF and suppresses the TNF-induced transcriptional activity of NF-kappa-B. In terms of processing, exists in a nitric oxide (NO)-modified form. The exact nature of the modification is unknown, but it suppresses the TNF-induced transcriptional activity of NF-kappa-B.

It carries out the reaction (R)-S-lactoylglutathione = methylglyoxal + glutathione. The protein operates within secondary metabolite metabolism; methylglyoxal degradation; (R)-lactate from methylglyoxal: step 1/2. With respect to regulation, regulated by oxidation of Cys-139 in response to the redox state of the cell. Results in the alternative formation of cystine or glutathione-bound cysteine, the latter modification leading to reduced enzyme activity. Its function is as follows. Catalyzes the conversion of hemimercaptal, formed from methylglyoxal and glutathione, to S-lactoylglutathione. Involved in the regulation of TNF-induced transcriptional activity of NF-kappa-B. Required for normal osteoclastogenesis. This is Lactoylglutathione lyase (GLO1) from Homo sapiens (Human).